The following is a 561-amino-acid chain: 4-coumarate--CoA ligase 1 (561 aa).

ATP is bound by residues serine 210, serine 211, glycine 212, threonine 213, threonine 214, and lysine 218. (E)-4-coumaroyl-AMP is bound by residues tyrosine 260 and serine 264. Residue lysine 281 participates in CoA binding. The SBD1 stretch occupies residues 283-352 (EINLLLELIQ…AKFPNAKLGQ (70 aa)). (E)-4-coumaroyl-AMP is bound by residues alanine 330, glutamine 352, glycine 353, threonine 357, and methionine 365. 3 residues coordinate ATP: glutamine 352, glycine 353, and threonine 357. Residues 353 to 420 (GYGMTEAGPV…IRGHQIMKGY (68 aa)) form an SBD2 region. ATP is bound by residues aspartate 441 and arginine 456. Lysine 458 and lysine 462 together coordinate (E)-4-coumaroyl-AMP. Lysine 464 and glycine 465 together coordinate CoA. Lysine 547 contacts ATP.

It belongs to the ATP-dependent AMP-binding enzyme family. Mg(2+) is required as a cofactor. Preferentially expressed in roots, bolting stems and siliques. Also detected in leaves.

It catalyses the reaction (E)-4-coumarate + ATP + CoA = (E)-4-coumaroyl-CoA + AMP + diphosphate. The catalysed reaction is (E)-caffeate + ATP + CoA = (E)-caffeoyl-CoA + AMP + diphosphate. The enzyme catalyses (E)-ferulate + ATP + CoA = (E)-feruloyl-CoA + AMP + diphosphate. It carries out the reaction (E)-4-coumarate + ATP + H(+) = (E)-4-coumaroyl-AMP + diphosphate. It catalyses the reaction (E)-4-coumaroyl-AMP + CoA = (E)-4-coumaroyl-CoA + AMP + H(+). The catalysed reaction is (E)-caffeate + ATP + H(+) = (E)-caffeoyl-AMP + diphosphate. The enzyme catalyses (E)-caffeoyl-AMP + CoA = (E)-caffeoyl-CoA + AMP + H(+). It carries out the reaction (E)-ferulate + ATP + H(+) = (E)-feruloyl-AMP + diphosphate. It catalyses the reaction (E)-feruloyl-AMP + CoA = (E)-feruloyl-CoA + AMP + H(+). Its pathway is phytoalexin biosynthesis; 3,4',5-trihydroxystilbene biosynthesis; 3,4',5-trihydroxystilbene from trans-4-coumarate: step 1/2. Its function is as follows. Produces CoA thioesters of a variety of hydroxy- and methoxy-substituted cinnamic acids, which are used to synthesize several phenylpropanoid-derived compounds, including anthocyanins, flavonoids, isoflavonoids, coumarins, lignin, suberin and wall-bound phenolics. Follows a two-step reaction mechanism, wherein the carboxylate substrate first undergoes adenylation by ATP, followed by a thioesterification in the presence of CoA to yield the final CoA thioesters. This is 4-coumarate--CoA ligase 1 from Arabidopsis thaliana (Mouse-ear cress).